An 832-amino-acid polypeptide reads, in one-letter code: Protein P (832 aa).

A terminal protein domain (TP) region spans residues 1 to 177 (MPLSYQHFRR…FCGSPYSWEQ (177 aa)). The tract at residues 178-335 (ELQHGAESFH…YCLSHIVNLL (158 aa)) is spacer. Positions 241 to 263 (RRPFGVEPSGSGHTTNLASKSAS) are disordered. Residues 251–263 (SGHTTNLASKSAS) are compositionally biased toward polar residues. The interval 336–679 (EDWGPCAEHG…YLNLYPVARQ (344 aa)) is polymerase/reverse transcriptase domain (RT). The Reverse transcriptase domain maps to 346–589 (EHHIRIPRTP…YSLHFMGYVI (244 aa)). The Mg(2+) site is built by D418, D540, and D541.

This sequence belongs to the hepadnaviridae P protein family.

It catalyses the reaction DNA(n) + a 2'-deoxyribonucleoside 5'-triphosphate = DNA(n+1) + diphosphate. It carries out the reaction Endonucleolytic cleavage to 5'-phosphomonoester.. Activated by host HSP70 and HSP40 in vitro to be able to bind the epsilon loop of the pgRNA. Because deletion of the RNase H region renders the protein partly chaperone-independent, the chaperones may be needed indirectly to relieve occlusion of the RNA-binding site by this domain. Inhibited by several reverse-transcriptase inhibitors: Lamivudine, Adefovir and Entecavir. In terms of biological role, multifunctional enzyme that converts the viral RNA genome into dsDNA in viral cytoplasmic capsids. This enzyme displays a DNA polymerase activity that can copy either DNA or RNA templates, and a ribonuclease H (RNase H) activity that cleaves the RNA strand of RNA-DNA heteroduplexes in a partially processive 3'- to 5'-endonucleasic mode. Neo-synthesized pregenomic RNA (pgRNA) are encapsidated together with the P protein, and reverse-transcribed inside the nucleocapsid. Initiation of reverse-transcription occurs first by binding the epsilon loop on the pgRNA genome, and is initiated by protein priming, thereby the 5'-end of (-)DNA is covalently linked to P protein. Partial (+)DNA is synthesized from the (-)DNA template and generates the relaxed circular DNA (RC-DNA) genome. After budding and infection, the RC-DNA migrates in the nucleus, and is converted into a plasmid-like covalently closed circular DNA (cccDNA). The activity of P protein does not seem to be necessary for cccDNA generation, and is presumably released from (+)DNA by host nuclear DNA repair machinery. This Homo sapiens (Human) protein is Protein P.